Consider the following 125-residue polypeptide: Small ribosomal subunit protein uS12 (125 aa).

Asp-89 is subject to 3-methylthioaspartic acid. Residues 101–125 (SLDTAGVKDRKQSRSKYGAKRPKKA) are disordered. The span at 113 to 125 (SRSKYGAKRPKKA) shows a compositional bias: basic residues.

The protein belongs to the universal ribosomal protein uS12 family. Part of the 30S ribosomal subunit. Contacts proteins S8 and S17. May interact with IF1 in the 30S initiation complex.

In terms of biological role, with S4 and S5 plays an important role in translational accuracy. Interacts with and stabilizes bases of the 16S rRNA that are involved in tRNA selection in the A site and with the mRNA backbone. Located at the interface of the 30S and 50S subunits, it traverses the body of the 30S subunit contacting proteins on the other side and probably holding the rRNA structure together. The combined cluster of proteins S8, S12 and S17 appears to hold together the shoulder and platform of the 30S subunit. This chain is Small ribosomal subunit protein uS12, found in Thiobacillus denitrificans (strain ATCC 25259 / T1).